A 615-amino-acid chain; its full sequence is Sorting nexin-41 (615 aa).

Residues 1-71 (MWNDEDNNPY…DEGDYVGQAN (71 aa)) form a disordered region. Residues 42–53 (SHSSNPDISDFS) are compositionally biased toward low complexity. Positions 93-210 (PDMPILITDA…RFLDPNVSWS (118 aa)) constitute a PX domain. Residues Arg-127, Ser-129, Lys-153, and Arg-176 each coordinate a 1,2-diacyl-sn-glycero-3-phospho-(1D-myo-inositol-3-phosphate). Disordered stretches follow at residues 218–277 (ASSV…RFPP) and 432–504 (QYLN…RKTS). Polar residues-rich tracts occupy residues 252 to 263 (LKSTSGTSSSPN) and 434 to 446 (LNRT…TKQR). Positions 447–456 (SLSTSSATSS) are enriched in low complexity.

This sequence belongs to the sorting nexin family.

It localises to the endosome membrane. The protein resides in the endomembrane system. Its function is as follows. May be required for cytoplasm to vacuole transport (Cvt) and pexophagy. In Emericella nidulans (strain FGSC A4 / ATCC 38163 / CBS 112.46 / NRRL 194 / M139) (Aspergillus nidulans), this protein is Sorting nexin-41 (snx41).